The following is a 329-amino-acid chain: Peroxidase 58 (329 aa).

A signal peptide spans 1-23 (MGLSKTIPLVLLPILMFGVLSNA). Disulfide bonds link cysteine 34–cysteine 116, cysteine 67–cysteine 72, cysteine 122–cysteine 325, and cysteine 201–cysteine 234. An N-linked (GlcNAc...) asparagine glycan is attached at asparagine 36. Histidine 65 (proton acceptor) is an active-site residue. Residues aspartate 66, valine 69, glycine 71, aspartate 73, and serine 75 each contribute to the Ca(2+) site. Position 164 (proline 164) interacts with substrate. Residue histidine 194 coordinates heme b. Ca(2+) is bound at residue threonine 195. N-linked (GlcNAc...) asparagine glycosylation is present at asparagine 210. Residues aspartate 247, serine 250, and aspartate 255 each coordinate Ca(2+).

It belongs to the peroxidase family. Classical plant (class III) peroxidase subfamily. It depends on heme b as a cofactor. Requires Ca(2+) as cofactor.

The protein resides in the secreted. The catalysed reaction is 2 a phenolic donor + H2O2 = 2 a phenolic radical donor + 2 H2O. Removal of H(2)O(2), oxidation of toxic reductants, biosynthesis and degradation of lignin, suberization, auxin catabolism, response to environmental stresses such as wounding, pathogen attack and oxidative stress. These functions might be dependent on each isozyme/isoform in each plant tissue. This is Peroxidase 58 (PER58) from Arabidopsis thaliana (Mouse-ear cress).